A 258-amino-acid polypeptide reads, in one-letter code: uncharacterized protein (258 aa).

The next 5 helical transmembrane spans lie at 14–34 (LAFPWLSAVILNSFLLALAAI), 53–73 (VIIWAALGWRGYLVVLAYFFV), 110–130 (AALCALAIAFGPEPWQLWLAL), 185–205 (GLALAVLGYGVGLISFGGIIF), and 238–258 (GINTFLGAAIAIGIEATAQLI).

It belongs to the TMEM19 family.

It is found in the cell membrane. This is an uncharacterized protein from Synechocystis sp. (strain ATCC 27184 / PCC 6803 / Kazusa).